Consider the following 656-residue polypeptide: PAN2-PAN3 deadenylation complex subunit pan3 (656 aa).

2 disordered regions span residues 1-24 (MAATRYNSGDLRRQVGSPRAKNRD) and 75-117 (SFTP…QQAN). Residues 24-53 (DTKETLCRNVVIYGHCRWEDSGCTFNHDQN) form a C3H1-type zinc finger. Positions 63 to 83 (NSNRRVFNVESPSFTPANQQQ) match the PABPC-interacting motif-2 (PAM-2) motif. 2 stretches are compositionally biased toward polar residues: residues 75-96 (SFTPANQQQSAGKKSTFSSQAA) and 107-117 (GTSTPTLQQAN). The interval 251 to 514 (QLLPNSGLPN…TVETLLGGIT (264 aa)) is pseudokinase domain. ATP-binding positions include 275–280 (TRNSTC), Arg-302, 352–359 (DFHPLSET), and 412–413 (SK). Positions 515–553 (THLANFANFVMQESDEKEFHLMRELENGRIARLMFKLSV) form a coiled coil. A knob domain region spans residues 554 to 656 (VNERGDSCGV…SKPSATGATI (103 aa)).

This sequence belongs to the protein kinase superfamily. PAN3 family. As to quaternary structure, homodimer. Forms a heterotrimer with a catalytic subunit par-1/pan2 to form the poly(A)-nuclease (PAN) deadenylation complex. Interacts (via PAM-2 motif) with poly(A)-binding protein pabp-1 (via PABC domain), conferring substrate specificity of the enzyme complex.

It is found in the cytoplasm. Functionally, regulatory subunit of the poly(A)-nuclease (PAN) deadenylation complex, one of two cytoplasmic mRNA deadenylases involved in mRNA turnover. PAN specifically shortens poly(A) tails of RNA and the activity is stimulated by poly(A)-binding protein pabp-1. PAN deadenylation is followed by rapid degradation of the shortened mRNA tails by the CCR4-NOT complex. Deadenylated mRNAs are then degraded by two alternative mechanisms, namely exosome-mediated 3'-5' exonucleolytic degradation, or deadenylation-dependent mRNA decaping and subsequent 5'-3' exonucleolytic degradation by rgb-30/xrn1. May also be involved in post-transcriptional maturation of mRNA poly(A) tails. par-2/pan3 acts as a positive regulator for PAN activity, recruiting the catalytic subunit par-1/pan2 to mRNA via its interaction with RNA and with pabp-1. In Neurospora crassa (strain ATCC 24698 / 74-OR23-1A / CBS 708.71 / DSM 1257 / FGSC 987), this protein is PAN2-PAN3 deadenylation complex subunit pan3 (par-2).